We begin with the raw amino-acid sequence, 1138 residues long: Nonsense-mediated mRNA decay factor SMG7 (1138 aa).

Residue Ser-2 is modified to N-acetylserine. TPR repeat units lie at residues 152-185 and 187-219; these read QHCL…VPSN and QPYN…KFPF. Disordered regions lie at residues 515 to 612, 649 to 745, 838 to 871, 990 to 1090, and 1106 to 1138; these read ATDG…LPSR, STAH…YQQA, QPNM…KSSP, SLPA…PSME, and SSMM…NPPH. Position 519 is a phosphoserine (Ser-519). Positions 525–537 are enriched in polar residues; it reads VLSTGRNPSNSCD. Residues 548–582 are compositionally biased toward basic and acidic residues; that stretch reads ENIKPREVNQGRSFPPKEVKSQTELRKTPVSEARK. Thr-575 is modified (phosphothreonine). Composition is skewed to polar residues over residues 584-597 and 649-673; these read PVTQ…NSQF and STAH…SQQR. The span at 674–721 shows a compositional bias: low complexity; sequence PSGPGPMNQGPQQSQPPSQPPLTSLPAQPTAQSTSQLQVQALAQQQQS. Phosphoserine occurs at positions 732 and 848. Over residues 854–868 the composition is skewed to basic and acidic residues; that stretch reads PEQDPVPRMPFEDPK. Polar residues predominate over residues 990 to 999; sequence SLPASSDHST. Positions 1000 to 1026 are enriched in low complexity; it reads PASQSPHSSNPSSLPSSPPTHNHNSAP. Over residues 1037-1051 the composition is skewed to basic and acidic residues; the sequence is DNRDRRPADRWKTDK. The span at 1063–1082 shows a compositional bias: polar residues; it reads SATSSSESSWHQASTPSGTW. The segment covering 1118 to 1132 has biased composition (low complexity); that stretch reads QLLMQQKQKQQRGQG.

Part of a complex that contains SMG5, SMG7, PPP2CA, a short isoform of UPF3A (isoform UPF3AS, but not isoform UPF3AL) and phosphorylated UPF1. Interacts with DHX34; the interaction is RNA-independent.

Its subcellular location is the cytoplasm. It is found in the nucleus. Functionally, plays a role in nonsense-mediated mRNA decay. Recruits UPF1 to cytoplasmic mRNA decay bodies. Together with SMG5 is thought to provide a link to the mRNA degradation machinery involving exonucleolytic pathways, and to serve as an adapter for UPF1 to protein phosphatase 2A (PP2A), thereby triggering UPF1 dephosphorylation. In Mus musculus (Mouse), this protein is Nonsense-mediated mRNA decay factor SMG7.